A 638-amino-acid polypeptide reads, in one-letter code: 1-deoxy-D-xylulose-5-phosphate synthase (638 aa).

Thiamine diphosphate is bound by residues histidine 71 and 112–114; that span reads SHA. Aspartate 144 is a Mg(2+) binding site. Residues 145–146, asparagine 173, tyrosine 284, and glutamate 365 each bind thiamine diphosphate; that span reads GA. Asparagine 173 serves as a coordination point for Mg(2+).

It belongs to the transketolase family. DXPS subfamily. As to quaternary structure, homodimer. Mg(2+) serves as cofactor. It depends on thiamine diphosphate as a cofactor.

The catalysed reaction is D-glyceraldehyde 3-phosphate + pyruvate + H(+) = 1-deoxy-D-xylulose 5-phosphate + CO2. Its pathway is metabolic intermediate biosynthesis; 1-deoxy-D-xylulose 5-phosphate biosynthesis; 1-deoxy-D-xylulose 5-phosphate from D-glyceraldehyde 3-phosphate and pyruvate: step 1/1. Functionally, catalyzes the acyloin condensation reaction between C atoms 2 and 3 of pyruvate and glyceraldehyde 3-phosphate to yield 1-deoxy-D-xylulose-5-phosphate (DXP). In Mycobacterium bovis (strain ATCC BAA-935 / AF2122/97), this protein is 1-deoxy-D-xylulose-5-phosphate synthase.